Here is a 153-residue protein sequence, read N- to C-terminus: Small ribosomal subunit protein bS6 (153 aa).

Residues 94–153 form a disordered region; the sequence is EAHEEGPSAMMQKRDRDDRPRRDGDRPDRGDRGDRGDRGPREGGRESFGDRPRRPREDRA.

It belongs to the bacterial ribosomal protein bS6 family.

Functionally, binds together with bS18 to 16S ribosomal RNA. The polypeptide is Small ribosomal subunit protein bS6 (Allorhizobium ampelinum (strain ATCC BAA-846 / DSM 112012 / S4) (Agrobacterium vitis (strain S4))).